We begin with the raw amino-acid sequence, 138 residues long: Ergosterol biosynthetic protein 28 (138 aa).

The chain crosses the membrane as a helical span at residues 17–33; it reads LPYWLLFISVVSIFNSV. N-linked (GlcNAc...) asparagine glycosylation is present at Asn40. 3 consecutive transmembrane segments (helical) span residues 56 to 75, 87 to 107, and 114 to 131; these read LSARTFGTWTLITSIVRFYG, LTQFTFAIAAWHFLSEWLYFG, and GLSGPLIVSSVSLVWMYL.

It belongs to the ERG28 family. As to quaternary structure, heterotetramer of ERG25, ERG26, ERG27 and ERG28. ERG28 acts as a scaffold to tether ERG27 and other 4,4-demethylation-related enzymes, forming a demethylation enzyme complex, in the endoplasmic reticulum. Interacts with ERG25, ERG26 and ERG27. Also interacts with ERG1, ERG3, ERG5, ERG6 and ERG11.

The protein localises to the endoplasmic reticulum membrane. Its function is as follows. Part of the third module of ergosterol biosynthesis pathway that includes the late steps of the pathway. ERG28 has a role as a scaffold to help anchor the catalytic components of the C-4 demethylation complex ERG25, ERG26 and ERG27 to the endoplasmic reticulum. The third module or late pathway involves the ergosterol synthesis itself through consecutive reactions that mainly occur in the endoplasmic reticulum (ER) membrane. Firstly, the squalene synthase ERG9 catalyzes the condensation of 2 farnesyl pyrophosphate moieties to form squalene, which is the precursor of all steroids. Squalene synthase is crucial for balancing the incorporation of farnesyl diphosphate (FPP) into sterol and nonsterol isoprene synthesis. Secondly, the squalene epoxidase ERG1 catalyzes the stereospecific oxidation of squalene to (S)-2,3-epoxysqualene, which is considered to be a rate-limiting enzyme in steroid biosynthesis. Then, the lanosterol synthase ERG7 catalyzes the cyclization of (S)-2,3 oxidosqualene to lanosterol, a reaction that forms the sterol core. In the next steps, lanosterol is transformed to zymosterol through a complex process involving various demethylation, reduction and desaturation reactions. The lanosterol 14-alpha-demethylase ERG11 (also known as CYP51) catalyzes C14-demethylation of lanosterol to produce 4,4'-dimethyl cholesta-8,14,24-triene-3-beta-ol, which is critical for ergosterol biosynthesis. The C-14 reductase ERG24 reduces the C14=C15 double bond of 4,4-dimethyl-cholesta-8,14,24-trienol to produce 4,4-dimethyl-cholesta-8,24-dienol. 4,4-dimethyl-cholesta-8,24-dienol is substrate of the C-4 demethylation complex ERG25-ERG26-ERG27 in which ERG25 catalyzes the three-step monooxygenation required for the demethylation of 4,4-dimethyl and 4alpha-methylsterols, ERG26 catalyzes the oxidative decarboxylation that results in a reduction of the 3-beta-hydroxy group at the C-3 carbon to an oxo group, and ERG27 is responsible for the reduction of the keto group on the C-3. ERG28 has a role as a scaffold to help anchor ERG25, ERG26 and ERG27 to the endoplasmic reticulum and ERG29 regulates the activity of the iron-containing C4-methylsterol oxidase ERG25. Then, the sterol 24-C-methyltransferase ERG6 catalyzes the methyl transfer from S-adenosyl-methionine to the C-24 of zymosterol to form fecosterol. The C-8 sterol isomerase ERG2 catalyzes the reaction which results in unsaturation at C-7 in the B ring of sterols and thus converts fecosterol to episterol. The sterol-C5-desaturase ERG3 then catalyzes the introduction of a C-5 double bond in the B ring to produce 5-dehydroepisterol. The C-22 sterol desaturase ERG5 further converts 5-dehydroepisterol into ergosta-5,7,22,24(28)-tetraen-3beta-ol by forming the C-22(23) double bond in the sterol side chain. Finally, ergosta-5,7,22,24(28)-tetraen-3beta-ol is substrate of the C-24(28) sterol reductase ERG4 to produce ergosterol. The sequence is that of Ergosterol biosynthetic protein 28 from Candida albicans (strain SC5314 / ATCC MYA-2876) (Yeast).